A 187-amino-acid polypeptide reads, in one-letter code: Cytochrome b-245 chaperone 1 (187 aa).

A helical membrane pass occupies residues 20–42 (GIRSWSLLVGILSIGLAAAYYSG). Ser-168 bears the Phosphoserine mark.

This sequence belongs to the CYBC1 family. As to quaternary structure, interacts with CYBB; CYBC1 may act as a chaperone stabilizing Cytochrome b-245 heterodimer. As to expression, highly expressed in macrophages, neutrophils and monocytes.

The protein localises to the endoplasmic reticulum membrane. Functionally, functions as a chaperone necessary for a stable expression of the CYBA and CYBB subunits of the cytochrome b-245 heterodimer. Controls the phagocyte respiratory burst and is essential for innate immunity. The sequence is that of Cytochrome b-245 chaperone 1 from Homo sapiens (Human).